We begin with the raw amino-acid sequence, 237 residues long: Phosphoribosylaminoimidazole-succinocarboxamide synthase (237 aa).

This sequence belongs to the SAICAR synthetase family.

The enzyme catalyses 5-amino-1-(5-phospho-D-ribosyl)imidazole-4-carboxylate + L-aspartate + ATP = (2S)-2-[5-amino-1-(5-phospho-beta-D-ribosyl)imidazole-4-carboxamido]succinate + ADP + phosphate + 2 H(+). It functions in the pathway purine metabolism; IMP biosynthesis via de novo pathway; 5-amino-1-(5-phospho-D-ribosyl)imidazole-4-carboxamide from 5-amino-1-(5-phospho-D-ribosyl)imidazole-4-carboxylate: step 1/2. This Listeria welshimeri serovar 6b (strain ATCC 35897 / DSM 20650 / CCUG 15529 / CIP 8149 / NCTC 11857 / SLCC 5334 / V8) protein is Phosphoribosylaminoimidazole-succinocarboxamide synthase.